The chain runs to 139 residues: D-ribose pyranase (139 aa).

His20 serves as the catalytic Proton donor. Substrate-binding positions include Asp28, His106, and 128-130; that span reads YAN.

The protein belongs to the RbsD / FucU family. RbsD subfamily. In terms of assembly, homodecamer.

The protein localises to the cytoplasm. The catalysed reaction is beta-D-ribopyranose = beta-D-ribofuranose. It participates in carbohydrate metabolism; D-ribose degradation; D-ribose 5-phosphate from beta-D-ribopyranose: step 1/2. In terms of biological role, catalyzes the interconversion of beta-pyran and beta-furan forms of D-ribose. The sequence is that of D-ribose pyranase from Aeromonas hydrophila subsp. hydrophila (strain ATCC 7966 / DSM 30187 / BCRC 13018 / CCUG 14551 / JCM 1027 / KCTC 2358 / NCIMB 9240 / NCTC 8049).